Consider the following 183-residue polypeptide: Proton-transporting V-type ATPase complex assembly regulator TMEM9 (183 aa).

Residues 1 to 20 (MKLLSLVAVVGCLLVPPAEA) form the signal peptide. N-linked (GlcNAc...) asparagine glycosylation is found at Asn-21, Asn-38, and Asn-47. The Extracellular portion of the chain corresponds to 21-89 (NKSSEDIRCK…YEERSTTTIK (69 aa)). Residues 90 to 110 (VIIVIYLSVVGALLLYMAFLM) traverse the membrane as a helical segment. At 111 to 183 (LVDPLIRKPD…TVFDRHKMLS (73 aa)) the chain is on the cytoplasmic side. Residues Ser-137 and Ser-144 each carry the phosphoserine modification.

Belongs to the TMEM9 family. As to quaternary structure, interacts with the v-ATPase accessory protein ATP6AP2 and with the v-ATPase complex subunit ATP6V0D1; these interactions lead to the assembly of the v-ATPase complex. N-glycosylated. Highly expressed in adrenal gland, thyroid gland, testis, ovary and prostate. Moderate expression in trachea, spinal cord, stomach, colon, small intestine and spleen. Low expression in bone marrow, lymph node, thymus and peripheral blood lymphocytes. Expression is detected in hematopoietic cell lines including those of myeloid, erythroid, B- and T-cell origin.

Its subcellular location is the lysosome membrane. The protein resides in the late endosome membrane. It is found in the endosome. It localises to the multivesicular body membrane. Transmembrane protein that binds to and facilitates the assembly of lysosomal proton-transporting V-type ATPase (v-ATPase), resulting in enhanced lysosomal acidification and trafficking. By bringing the v-ATPase accessory protein ATP6AP2 and the v-ATPase subunit ATP6V0D1 together, allows v-ATPase complex formation and activation. TMEM9-controlled vesicular acidification induces hyperactivation of Wnt/beta-catenin signaling, involved in development, tissue homeostasis and tissue regeneration, through lysosomal degradation of adenomatous polyposis coli/APC. In the liver, involved in hepatic regeneration. The protein is Proton-transporting V-type ATPase complex assembly regulator TMEM9 of Homo sapiens (Human).